We begin with the raw amino-acid sequence, 285 residues long: MKYIGAHVSAAGGLANAAIRAAEIDATAFALFTKNQRQWRAAPLTAQIIDDFKAACEKYHYSPAQILPHDSYLINLGHPVSEALEKSRDAFIDEMQRCEQLGLSLLNFHPGSHLQQIPEEECLARIAESINIALEKTQGVTAVIENTAGQGSNLGFRFEHLAAIIDGVDDKSRVGVCIDTCHAFAAGYDLRTTDECEKTFADFERVVGFTYLRGMHLNDAKSAFGSRVDRHHSLGEGNIGHDAFRWIMQDDRFDGIPLILETINPDIWAEEIAWLKAQQTAKVVA.

H69, H109, E145, D179, H182, H216, D229, H231, and E261 together coordinate Zn(2+).

It belongs to the AP endonuclease 2 family. Zn(2+) serves as cofactor.

It catalyses the reaction Endonucleolytic cleavage to 5'-phosphooligonucleotide end-products.. Its function is as follows. Endonuclease IV plays a role in DNA repair. It cleaves phosphodiester bonds at apurinic or apyrimidinic (AP) sites, generating a 3'-hydroxyl group and a 5'-terminal sugar phosphate. This is Probable endonuclease 4 from Citrobacter koseri (strain ATCC BAA-895 / CDC 4225-83 / SGSC4696).